Reading from the N-terminus, the 134-residue chain is Cytochrome b5 (134 aa).

Alanine 2 is modified (N-acetylalanine). N6-acetyllysine is present on residues lysine 7, lysine 10, and lysine 19. A Cytochrome b5 heme-binding domain is found at 9 to 85; sequence VKYYTLEEIQ…SKTYIIGELH (77 aa). Heme-binding residues include histidine 44 and histidine 68. A helical membrane pass occupies residues 109-131; that stretch reads WWTNWVIPAISALVVALMYRLYM.

Belongs to the cytochrome b5 family.

Its subcellular location is the endoplasmic reticulum membrane. The protein localises to the microsome membrane. Cytochrome b5 is a membrane-bound hemoprotein functioning as an electron carrier for several membrane-bound oxygenases. It is also involved in several steps of the sterol biosynthesis pathway, particularly in the C-6 double bond introduction during the C-6 desaturation. The protein is Cytochrome b5 (Cyb5a) of Rattus norvegicus (Rat).